Here is a 68-residue protein sequence, read N- to C-terminus: UPF0337 protein RB10934 (68 aa).

Belongs to the UPF0337 (CsbD) family.

The polypeptide is UPF0337 protein RB10934 (Rhodopirellula baltica (strain DSM 10527 / NCIMB 13988 / SH1)).